The chain runs to 141 residues: Photosystem I reaction center subunit IV A, chloroplastic (141 aa).

The transit peptide at 1–49 (MASCNMASAASNFLVATPNVASNTNTSRTTMLFFSSKNYGSTAPRLVVR) directs the protein to the chloroplast. Residues 57 to 73 (PAAAATAEPAEAPVKAA) show a composition bias toward low complexity. The tract at residues 57–83 (PAAAATAEPAEAPVKAAKPPPIGPKRG) is disordered.

This sequence belongs to the PsaE family. 2 isoforms exists (ratio 1:1). With or without the N-terminal alanine.

The protein resides in the plastid. Its subcellular location is the chloroplast thylakoid membrane. Its function is as follows. Stabilizes the interaction between PsaC and the PSI core, assists the docking of the ferredoxin to PSI and interacts with ferredoxin-NADP oxidoreductase. This chain is Photosystem I reaction center subunit IV A, chloroplastic (PSAEA), found in Nicotiana sylvestris (Wood tobacco).